A 388-amino-acid polypeptide reads, in one-letter code: Chorismate synthase (388 aa).

2 residues coordinate NADP(+): Arg-39 and Arg-45. Residues 130–132, 251–252, Gly-296, 311–315, and Arg-337 contribute to the FMN site; these read RSS, NA, and KPIPT.

The protein belongs to the chorismate synthase family. In terms of assembly, homotetramer. The cofactor is FMNH2.

It catalyses the reaction 5-O-(1-carboxyvinyl)-3-phosphoshikimate = chorismate + phosphate. The protein operates within metabolic intermediate biosynthesis; chorismate biosynthesis; chorismate from D-erythrose 4-phosphate and phosphoenolpyruvate: step 7/7. In terms of biological role, catalyzes the anti-1,4-elimination of the C-3 phosphate and the C-6 proR hydrogen from 5-enolpyruvylshikimate-3-phosphate (EPSP) to yield chorismate, which is the branch point compound that serves as the starting substrate for the three terminal pathways of aromatic amino acid biosynthesis. This reaction introduces a second double bond into the aromatic ring system. In Streptococcus agalactiae serotype III (strain NEM316), this protein is Chorismate synthase.